Here is a 142-residue protein sequence, read N- to C-terminus: uncharacterized protein (142 aa).

N-linked (GlcNAc...) asparagine; by host glycosylation is found at Asn-29 and Asn-67. A helical transmembrane segment spans residues 88-108; sequence VFYLGYPVIFIIGVTYFSIIA.

The protein localises to the membrane. This is an uncharacterized protein from Acanthamoeba polyphaga mimivirus (APMV).